The following is a 124-amino-acid chain: Fluoride-specific ion channel FluC (124 aa).

The next 4 helical transmembrane spans lie at 5 to 25 (VYIALLGALGCLCRYFLSGLV), 32 to 52 (SFPYGTLAVNLIGAFLIGLVM), 67 to 87 (FAITIGFLGGLTTFSTFSFET), and 96 to 116 (LLIAFVNVLVSVVACLTCTWI). The Na(+) site is built by G75 and T78.

Belongs to the fluoride channel Fluc/FEX (TC 1.A.43) family.

The protein localises to the cell inner membrane. It catalyses the reaction fluoride(in) = fluoride(out). With respect to regulation, na(+) is not transported, but it plays an essential structural role and its presence is essential for fluoride channel function. In terms of biological role, fluoride-specific ion channel. Important for reducing fluoride concentration in the cell, thus reducing its toxicity. The polypeptide is Fluoride-specific ion channel FluC (Geobacter sp. (strain M21)).